The chain runs to 136 residues: Large ribosomal subunit protein uL16 (136 aa).

The protein belongs to the universal ribosomal protein uL16 family. Part of the 50S ribosomal subunit.

In terms of biological role, binds 23S rRNA and is also seen to make contacts with the A and possibly P site tRNAs. This Edwardsiella ictaluri (strain 93-146) protein is Large ribosomal subunit protein uL16.